Reading from the N-terminus, the 763-residue chain is Lysine-specific histone demethylase 1 homolog 2 (763 aa).

One can recognise an SWIRM domain in the interval 53–152 (QRETETEALI…FGVSAAFPAS (100 aa)). FAD contacts are provided by Glu-192, Arg-194, Arg-200, and Glu-571.

It belongs to the flavin monoamine oxidase family. FAD is required as a cofactor.

Functionally, probable histone demethylase. The polypeptide is Lysine-specific histone demethylase 1 homolog 2 (Oryza sativa subsp. japonica (Rice)).